A 25-amino-acid chain; its full sequence is Pancreatic triacylglycerol lipase (25 aa).

A disulfide bond links C4 and C10.

The protein belongs to the AB hydrolase superfamily. Lipase family. As to quaternary structure, forms a 1:1 stoichiometric complex with (pro)colipase/CLPS.

It is found in the secreted. The catalysed reaction is a triacylglycerol + H2O = a diacylglycerol + a fatty acid + H(+). It catalyses the reaction 1,2,3-tributanoylglycerol + H2O = dibutanoylglycerol + butanoate + H(+). It carries out the reaction 1,2,3-tri-(9Z-octadecenoyl)-glycerol + H2O = di-(9Z)-octadecenoylglycerol + (9Z)-octadecenoate + H(+). The enzyme catalyses all-trans-retinyl hexadecanoate + H2O = all-trans-retinol + hexadecanoate + H(+). The catalysed reaction is 1,2-di-(9Z-octadecenoyl)-glycerol + H2O = (9Z-octadecenoyl)-glycerol + (9Z)-octadecenoate + H(+). Its activity is regulated as follows. Inhibited by bile salts, is reactivated by (pro)colipase/CLPS. Plays an important role in fat metabolism. It preferentially splits the esters of long-chain fatty acids at positions 1 and 3, producing mainly 2-monoacylglycerol and free fatty acids, and shows considerably higher activity against insoluble emulsified substrates than against soluble ones. The polypeptide is Pancreatic triacylglycerol lipase (PNLIP) (Felis catus (Cat)).